The primary structure comprises 337 residues: Protein LEG1 homolog (337 aa).

The signal sequence occupies residues 1–20 (MAVLASWVWVLAGCFCAAVA). N171 is a glycosylation site (N-linked (GlcNAc...) asparagine).

The protein belongs to the LEG1 family.

The protein resides in the secreted. May be involved in early liver development. This is Protein LEG1 homolog from Mus musculus (Mouse).